The chain runs to 102 residues: Small ribosomal subunit protein uS14 (102 aa).

This sequence belongs to the universal ribosomal protein uS14 family. Part of the 30S ribosomal subunit. Contacts proteins S3 and S10.

Binds 16S rRNA, required for the assembly of 30S particles and may also be responsible for determining the conformation of the 16S rRNA at the A site. This chain is Small ribosomal subunit protein uS14, found in Wolbachia sp. subsp. Brugia malayi (strain TRS).